Reading from the N-terminus, the 437-residue chain is Adenylosuccinate synthetase (437 aa).

Residues 12 to 18 (GDEGKGK) and 40 to 42 (GHT) each bind GTP. Residue Asp13 is the Proton acceptor of the active site. Mg(2+) contacts are provided by Asp13 and Gly40. Residues 13–16 (DEGK), 38–41 (NAGH), Thr131, Arg145, Gln225, and Thr240 each bind IMP. His41 functions as the Proton donor in the catalytic mechanism. The tract at residues 281–304 (TELLGADGKPDADGERLGTRGHEF) is disordered. The span at 288-303 (GKPDADGERLGTRGHE) shows a compositional bias: basic and acidic residues. 306–312 (TTTGRQR) serves as a coordination point for substrate. Residue Arg310 coordinates IMP. Residues Arg312, 338 to 340 (KLD), and 420 to 422 (STS) contribute to the GTP site.

It belongs to the adenylosuccinate synthetase family. Homodimer. Mg(2+) serves as cofactor.

It localises to the cytoplasm. It carries out the reaction IMP + L-aspartate + GTP = N(6)-(1,2-dicarboxyethyl)-AMP + GDP + phosphate + 2 H(+). It participates in purine metabolism; AMP biosynthesis via de novo pathway; AMP from IMP: step 1/2. Its function is as follows. Plays an important role in the de novo pathway of purine nucleotide biosynthesis. Catalyzes the first committed step in the biosynthesis of AMP from IMP. This is Adenylosuccinate synthetase from Ruegeria sp. (strain TM1040) (Silicibacter sp.).